We begin with the raw amino-acid sequence, 425 residues long: Serine--tRNA ligase (425 aa).

230-232 (TAE) serves as a coordination point for L-serine. 261-263 (RSE) contacts ATP. Glu284 contacts L-serine. Position 348 to 351 (348 to 351 (EISS)) interacts with ATP. Ser384 lines the L-serine pocket.

It belongs to the class-II aminoacyl-tRNA synthetase family. Type-1 seryl-tRNA synthetase subfamily. As to quaternary structure, homodimer. The tRNA molecule binds across the dimer.

Its subcellular location is the cytoplasm. The catalysed reaction is tRNA(Ser) + L-serine + ATP = L-seryl-tRNA(Ser) + AMP + diphosphate + H(+). It carries out the reaction tRNA(Sec) + L-serine + ATP = L-seryl-tRNA(Sec) + AMP + diphosphate + H(+). The protein operates within aminoacyl-tRNA biosynthesis; selenocysteinyl-tRNA(Sec) biosynthesis; L-seryl-tRNA(Sec) from L-serine and tRNA(Sec): step 1/1. Catalyzes the attachment of serine to tRNA(Ser). Is also able to aminoacylate tRNA(Sec) with serine, to form the misacylated tRNA L-seryl-tRNA(Sec), which will be further converted into selenocysteinyl-tRNA(Sec). In Nitratidesulfovibrio vulgaris (strain DSM 19637 / Miyazaki F) (Desulfovibrio vulgaris), this protein is Serine--tRNA ligase.